The chain runs to 192 residues: Visinin (192 aa).

Residue G2 is the site of N-myristoyl glycine attachment. EF-hand domains follow at residues 24-59, 61-96, 97-132, and 146-181; these read TEEELSRWYEGFQRQCPDGRIRCDEFERIYGNFFPN, EPQGYARHVFRSFDTNDDGTLDFREYIIALHLTSSG, KTHLKLEWAFSLFDVDRNGEVSKSEVLEIITAIFKM, and NSPQKRADKLWAYFNKGENDKIAEGEFIDGVMKNDA. Residues D74, N76, D78, T80, E85, D110, D112, N114, E116, E121, N164, K166, and E171 each coordinate Ca(2+).

It belongs to the recoverin family. In terms of tissue distribution, retinal cell specific protein.

Seems to be implicated in the pathway from retinal rod guanylate cyclase to rhodopsin. May be involved in the blocking of the phosphorylation of rhodopsin. This is Visinin from Gallus gallus (Chicken).